The chain runs to 377 residues: Mitogen-activated protein kinase HOG1 (377 aa).

The Protein kinase domain occupies 23 to 305 (YTELNPVGMG…AVEGLTHPYM (283 aa)). ATP contacts are provided by residues 29-37 (VGMGAFGLV) and Lys-52. Catalysis depends on Asp-144, which acts as the Proton acceptor. Residue Thr-174 is modified to Phosphothreonine. The TXY motif lies at 174–176 (TGY). Phosphotyrosine is present on Tyr-176. The tract at residues 354 to 377 (NETEGSEQPDSQVEQNNLDSANGA) is disordered. The span at 359 to 377 (SEQPDSQVEQNNLDSANGA) shows a compositional bias: polar residues.

It belongs to the protein kinase superfamily. Ser/Thr protein kinase family. MAP kinase subfamily. HOG1 sub-subfamily. Requires Mg(2+) as cofactor. In terms of processing, dually phosphorylated on Thr-174 and Tyr-176, which activates the enzyme. Phosphorylated in response to oxidative and salt stress.

It localises to the cytoplasm. The protein localises to the nucleus. It carries out the reaction L-seryl-[protein] + ATP = O-phospho-L-seryl-[protein] + ADP + H(+). It catalyses the reaction L-threonyl-[protein] + ATP = O-phospho-L-threonyl-[protein] + ADP + H(+). With respect to regulation, activated by tyrosine and threonine phosphorylation. Its function is as follows. Proline-directed serine/threonine-protein kinase involved in a signal transduction pathway that is activated by changes in the osmolarity of the extracellular environment. Controls osmotic regulation of transcription of target genes. Regulates stress-induced production and accumulation of glycerol and D-arabitol. HOG1 is also involved in virulence, morphogenesis and oxidative stress response especially through its role in chlamydospore formation, an oxygen-dependent morphogenetic program. The protein is Mitogen-activated protein kinase HOG1 (HOG1) of Candida albicans (strain SC5314 / ATCC MYA-2876) (Yeast).